Consider the following 210-residue polypeptide: Ribosomal RNA large subunit methyltransferase E (210 aa).

Residues Gly64, Trp66, Asp84, Asn100, and Asp125 each contribute to the S-adenosyl-L-methionine site. Lys165 serves as the catalytic Proton acceptor.

Belongs to the class I-like SAM-binding methyltransferase superfamily. RNA methyltransferase RlmE family.

It is found in the cytoplasm. It carries out the reaction uridine(2552) in 23S rRNA + S-adenosyl-L-methionine = 2'-O-methyluridine(2552) in 23S rRNA + S-adenosyl-L-homocysteine + H(+). In terms of biological role, specifically methylates the uridine in position 2552 of 23S rRNA at the 2'-O position of the ribose in the fully assembled 50S ribosomal subunit. The chain is Ribosomal RNA large subunit methyltransferase E from Buchnera aphidicola subsp. Baizongia pistaciae (strain Bp).